The primary structure comprises 247 residues: Chaperone protein NfaE (247 aa).

The signal sequence occupies residues 1–29 (MKMRAVAVFTGMLTGVLSVTGLLSAGAYA). The interval 106–125 (GQQSSRRRSVSTGGEFPSDR) is disordered.

The protein belongs to the periplasmic pilus chaperone family.

The protein resides in the periplasm. Functionally, involved in the biogenesis of the NFA-I adhesin. This Escherichia coli protein is Chaperone protein NfaE (nfaE).